Reading from the N-terminus, the 219-residue chain is Ribose-5-phosphate isomerase A (219 aa).

Residues 28–31 (TGST), 81–84 (DGAD), and 94–97 (KGGG) contribute to the substrate site. Glutamate 103 acts as the Proton acceptor in catalysis. Residue lysine 121 participates in substrate binding.

Belongs to the ribose 5-phosphate isomerase family. In terms of assembly, homodimer.

It catalyses the reaction aldehydo-D-ribose 5-phosphate = D-ribulose 5-phosphate. Its pathway is carbohydrate degradation; pentose phosphate pathway; D-ribose 5-phosphate from D-ribulose 5-phosphate (non-oxidative stage): step 1/1. Catalyzes the reversible conversion of ribose-5-phosphate to ribulose 5-phosphate. This chain is Ribose-5-phosphate isomerase A, found in Enterobacter cloacae.